We begin with the raw amino-acid sequence, 290 residues long: 4-diphosphocytidyl-2-C-methyl-D-erythritol kinase (290 aa).

The active site involves Lys14. 103-113 (PMGGGLGGGSS) is an ATP binding site. Asp145 is an active-site residue.

It belongs to the GHMP kinase family. IspE subfamily. Homodimer.

The enzyme catalyses 4-CDP-2-C-methyl-D-erythritol + ATP = 4-CDP-2-C-methyl-D-erythritol 2-phosphate + ADP + H(+). Its pathway is isoprenoid biosynthesis; isopentenyl diphosphate biosynthesis via DXP pathway; isopentenyl diphosphate from 1-deoxy-D-xylulose 5-phosphate: step 3/6. Functionally, catalyzes the phosphorylation of the position 2 hydroxy group of 4-diphosphocytidyl-2C-methyl-D-erythritol. The polypeptide is 4-diphosphocytidyl-2-C-methyl-D-erythritol kinase (Pectobacterium carotovorum subsp. carotovorum (strain PC1)).